Reading from the N-terminus, the 975-residue chain is Chromosome transmission fidelity protein 18 homolog (975 aa).

2 disordered regions span residues 30–83 (EGAS…KRQV) and 114–141 (SEEM…DLAE). Thr-51 is modified (phosphothreonine). Low complexity predominate over residues 58–77 (RGDAASSPAPAASVGSSQGG). At Ser-64 the chain carries Phosphoserine. Residues 122–136 (PPDSSPTDITPPPSP) show a composition bias toward pro residues. The residue at position 225 (Ser-225) is a Phosphoserine. Disordered regions lie at residues 246-276 (SDTL…GQDA) and 320-346 (RPSR…KWKS). Residue 374–381 (GPPGLGKT) coordinates ATP. The disordered stretch occupies residues 858–896 (ASARVENSPQVDGSPPGLEGLLGGIGEKGVHRPAPRNHE). Ser-871 is modified (phosphoserine).

This sequence belongs to the activator 1 small subunits family. CTF18 subfamily. In terms of assembly, component of the CTF18-RFC complex, which consists of CTF18, CTF8, DCC1, RFC2, RFC3, RFC4 and RFC5. During assembly of the CTF18-RFC complex, CTF18 may first assemble into a subcomplex with RFC2, RFC3, RFC4 and RFC5. CTF18 then interacts directly with CTF8, which in turn interacts with DCC1. The CTF18-RFC complex associates with PCNA and with DNA polymerase POLH. The CTF18-RFC complex does not interact with the Rad9/Rad1/Hus1 complex. CTF18 interacts with SMC1A and RAD21. Interacts with DDX11.

The protein resides in the nucleus. Chromosome cohesion factor involved in sister chromatid cohesion and fidelity of chromosome transmission. Component of one of the cell nuclear antigen loader complexes, CTF18-replication factor C (CTF18-RFC), which consists of CTF18, CTF8, DCC1, RFC2, RFC3, RFC4 and RFC5. The CTF18-RFC complex binds to single-stranded and primed DNAs and has weak ATPase activity that is stimulated by the presence of primed DNA, replication protein A (RPA) and by proliferating cell nuclear antigen (PCNA). The CTF18-RFC complex catalyzes the ATP-dependent loading of PCNA onto primed and gapped DNA. Interacts with and stimulates DNA polymerase POLH. During DNA repair synthesis, involved in loading DNA polymerase POLE at the sites of local damage. This is Chromosome transmission fidelity protein 18 homolog (CHTF18) from Homo sapiens (Human).